The chain runs to 160 residues: Calcium-binding protein CP1 (160 aa).

EF-hand domains lie at 22–49 (AFEI…IPSG), 52–87 (NDET…TPFS), and 93–128 (GDDG…AGLA). Ca(2+)-binding residues include Asp27, Asp29, Asp31, Lys33, Asp38, Asp65, Asn67, Asp69, Glu76, Asp106, Asp108, Asp110, Arg112, and Asp117.

In terms of tissue distribution, expressed in roots and flowers.

The protein resides in the cytoplasm. Its subcellular location is the cytosol. Functionally, binds calcium in vitro. This chain is Calcium-binding protein CP1, found in Arabidopsis thaliana (Mouse-ear cress).